We begin with the raw amino-acid sequence, 152 residues long: uncharacterized protein (152 aa).

This is an uncharacterized protein from Mycobacterium tuberculosis (strain ATCC 25618 / H37Rv).